Here is a 215-residue protein sequence, read N- to C-terminus: Large ribosomal subunit protein uL4 (215 aa).

A disordered region spans residues 51–88 (KGMGEVSGTTKKPYRQKGTGNARQGSLRAPQFRTGGAV).

The protein belongs to the universal ribosomal protein uL4 family. In terms of assembly, part of the 50S ribosomal subunit.

Its function is as follows. One of the primary rRNA binding proteins, this protein initially binds near the 5'-end of the 23S rRNA. It is important during the early stages of 50S assembly. It makes multiple contacts with different domains of the 23S rRNA in the assembled 50S subunit and ribosome. Forms part of the polypeptide exit tunnel. This is Large ribosomal subunit protein uL4 from Granulibacter bethesdensis (strain ATCC BAA-1260 / CGDNIH1).